The following is a 185-amino-acid chain: ATP-dependent protease subunit HslV (185 aa).

Thr-13 is an active-site residue. Na(+) is bound by residues Gly-167, Cys-170, and Thr-173.

It belongs to the peptidase T1B family. HslV subfamily. A double ring-shaped homohexamer of HslV is capped on each side by a ring-shaped HslU homohexamer. The assembly of the HslU/HslV complex is dependent on binding of ATP.

The protein localises to the cytoplasm. It catalyses the reaction ATP-dependent cleavage of peptide bonds with broad specificity.. With respect to regulation, allosterically activated by HslU binding. Functionally, protease subunit of a proteasome-like degradation complex believed to be a general protein degrading machinery. This chain is ATP-dependent protease subunit HslV, found in Sinorhizobium medicae (strain WSM419) (Ensifer medicae).